The chain runs to 410 residues: Na(+)/H(+) antiporter NhaS4 (410 aa).

A run of 11 helical transmembrane segments spans residues 7–27 (LLILANIIVIIGLARLIGLLF), 33–53 (PPVIGEIIAGIMLGPSLLGLL), 69–89 (FLYLLSEIGLIFYMFLVGLEL), 107–127 (VSIFFPFVLGIVLSFFVLYSL), 135–155 (FIPFALFIGAAMSITAFPVLA), 173–193 (LTCASVDDISAWCLLAIAIAV), 199–219 (IFGAFPTLLGIIVYTVFMVTL), 241–261 (LLTFIYIMVILSAMLTEWIGI), 291–311 (FVSTFLLPIFFAYSGLSTDLG), 319–339 (WAVCALVVAAAIAGKYCGVYV), and 376–396 (GVISPVIFTMFVIMAIITTII).

It belongs to the monovalent cation:proton antiporter 2 (CPA2) transporter (TC 2.A.37) family.

It localises to the membrane. Its function is as follows. Na(+)/H(+) antiporter. This chain is Na(+)/H(+) antiporter NhaS4 (nhaS4), found in Synechocystis sp. (strain ATCC 27184 / PCC 6803 / Kazusa).